A 395-amino-acid chain; its full sequence is Transcription termination/antitermination protein NusA (395 aa).

The 65-residue stretch at 137–201 (NSVLMGQVIL…TKKGLLLELS (65 aa)) folds into the S1 motif domain. KH domains follow at residues 243–291 (SHNS…TLAL) and 331–378 (KVRL…NENE).

It belongs to the NusA family. As to quaternary structure, monomer. Binds directly to the core enzyme of the DNA-dependent RNA polymerase and to nascent RNA.

The protein localises to the cytoplasm. Functionally, participates in both transcription termination and antitermination. The polypeptide is Transcription termination/antitermination protein NusA (Helicobacter pylori (strain J99 / ATCC 700824) (Campylobacter pylori J99)).